The primary structure comprises 283 residues: Phosphate import ATP-binding protein PstB 1 (283 aa).

Over residues 1-16 (MSSDDTTDPTADDESF) the composition is skewed to acidic residues. The tract at residues 1 to 35 (MSSDDTTDPTADDESFTDSPVAGLEQSTTTRGSGR) is disordered. Residues 38–278 (ISARNINVWY…PSSERVENYI (241 aa)) enclose the ABC transporter domain. An ATP-binding site is contributed by 70–77 (GPSGCGKS).

This sequence belongs to the ABC transporter superfamily. Phosphate importer (TC 3.A.1.7) family. In terms of assembly, the complex is composed of two ATP-binding proteins (PstB), two transmembrane proteins (PstC and PstA) and a solute-binding protein (PstS).

The protein resides in the cell membrane. The enzyme catalyses phosphate(out) + ATP + H2O = ADP + 2 phosphate(in) + H(+). Part of the ABC transporter complex PstSACB involved in phosphate import. Responsible for energy coupling to the transport system. The protein is Phosphate import ATP-binding protein PstB 1 of Natronomonas pharaonis (strain ATCC 35678 / DSM 2160 / CIP 103997 / JCM 8858 / NBRC 14720 / NCIMB 2260 / Gabara) (Halobacterium pharaonis).